We begin with the raw amino-acid sequence, 441 residues long: Amino-acid acetyltransferase (441 aa).

The region spanning 295-434 is the N-acetyltransferase domain; that stretch reads EKVRGAGIDD…KALYNFQRRS (140 aa).

This sequence belongs to the acetyltransferase family. ArgA subfamily.

The protein resides in the cytoplasm. The catalysed reaction is L-glutamate + acetyl-CoA = N-acetyl-L-glutamate + CoA + H(+). It functions in the pathway amino-acid biosynthesis; L-arginine biosynthesis; N(2)-acetyl-L-ornithine from L-glutamate: step 1/4. The polypeptide is Amino-acid acetyltransferase (Photobacterium profundum (strain SS9)).